Consider the following 336-residue polypeptide: MNSLIKPEGYKPSLDIRMTEVAIKKTKDYFESELAKELNLTRVSAPLFVRPETGLNDNLNGVERPVAFDVKGIGGDTVEVVHSLAKWKRMALKRYGFAPGEGLYTDMNAIRRDEDMDNLHSVYVDQWDWEQIILKSERTEETLKTIVSKIFSVFKRTENYLSGLYPNLQKYLPEDIFFVTTQELEDMYPELTPKERETALAKEKKAIFIMKIGDTLKSGIKHDGRAPDYDDWALNGDIVFYYPVLDLAYEVSSMGIRVDEDSLVAQLKKAGCEDRKNLKFHKELINKELPYTIGGGIGQSRICMFFLGKAHIGEVQASIWSDDMISECSQHNIQLL.

Belongs to the class-II aminoacyl-tRNA synthetase family. AsnA subfamily.

Its subcellular location is the cytoplasm. The catalysed reaction is L-aspartate + NH4(+) + ATP = L-asparagine + AMP + diphosphate + H(+). It functions in the pathway amino-acid biosynthesis; L-asparagine biosynthesis; L-asparagine from L-aspartate (ammonia route): step 1/1. The sequence is that of Aspartate--ammonia ligase from Ruminiclostridium cellulolyticum (strain ATCC 35319 / DSM 5812 / JCM 6584 / H10) (Clostridium cellulolyticum).